The following is a 212-amino-acid chain: Thymidylate kinase (212 aa).

10–17 (GLEGAGKT) serves as a coordination point for ATP.

It belongs to the thymidylate kinase family.

It carries out the reaction dTMP + ATP = dTDP + ADP. Its function is as follows. Phosphorylation of dTMP to form dTDP in both de novo and salvage pathways of dTTP synthesis. The sequence is that of Thymidylate kinase from Yersinia enterocolitica serotype O:8 / biotype 1B (strain NCTC 13174 / 8081).